Consider the following 526-residue polypeptide: Peptide chain release factor 3 (526 aa).

The 270-residue stretch at 8–277 (NKRRTFAIIS…GLTQWAPAPQ (270 aa)) folds into the tr-type G domain. Residues 17–24 (SHPDAGKT), 85–89 (DTPGH), and 139–142 (NKLD) contribute to the GTP site.

This sequence belongs to the TRAFAC class translation factor GTPase superfamily. Classic translation factor GTPase family. PrfC subfamily.

The protein resides in the cytoplasm. Functionally, increases the formation of ribosomal termination complexes and stimulates activities of RF-1 and RF-2. It binds guanine nucleotides and has strong preference for UGA stop codons. It may interact directly with the ribosome. The stimulation of RF-1 and RF-2 is significantly reduced by GTP and GDP, but not by GMP. In Histophilus somni (strain 2336) (Haemophilus somnus), this protein is Peptide chain release factor 3.